The sequence spans 82 residues: ATP synthase subunit c, chloroplastic (82 aa).

The next 2 helical transmembrane spans lie at 3–23 and 57–77; these read PIVA…AAIG and FAFM…LLFA.

Belongs to the ATPase C chain family. F-type ATPases have 2 components, F(1) - the catalytic core - and F(0) - the membrane proton channel. F(1) has five subunits: alpha(3), beta(3), gamma(1), delta(1), epsilon(1). F(0) has four main subunits: a(1), b(1), b'(1) and c(10-14). The alpha and beta chains form an alternating ring which encloses part of the gamma chain. F(1) is attached to F(0) by a central stalk formed by the gamma and epsilon chains, while a peripheral stalk is formed by the delta, b and b' chains.

It is found in the plastid. Its subcellular location is the chloroplast thylakoid membrane. Functionally, f(1)F(0) ATP synthase produces ATP from ADP in the presence of a proton or sodium gradient. F-type ATPases consist of two structural domains, F(1) containing the extramembraneous catalytic core and F(0) containing the membrane proton channel, linked together by a central stalk and a peripheral stalk. During catalysis, ATP synthesis in the catalytic domain of F(1) is coupled via a rotary mechanism of the central stalk subunits to proton translocation. Its function is as follows. Key component of the F(0) channel; it plays a direct role in translocation across the membrane. A homomeric c-ring of between 10-14 subunits forms the central stalk rotor element with the F(1) delta and epsilon subunits. The sequence is that of ATP synthase subunit c, chloroplastic from Chlorella vulgaris (Green alga).